The chain runs to 874 residues: MYQTTAALRSAFLEFFRRNGHQVVDSSSLVPGNDPTLLFTNAGMNQFKDVFLGEDKRDYSRATTAQRCVRAGGKHNDLDNVGYTARHHTFFEMLGNFSFGDYFKQDAIRFAWTFLTEELKLPKERLCVTVYETDDEAFEIWNKEIGVAAENIIRIGDNKGAAYASDNFWQMGDTGPCGPCTEIFYDHGEHIWGGRPGTPEEDGDRFIEIWNIVFMQYNRQADGTMDPLPKPSVDTGMGIERIAAIMQGVHSNYEIDIFQSLIKKTAEILGVTDLENKSLRVVADHIRSCAFLVADGVMPSNEGRGYVLRRIIRRAVRHGNKLGATEAFFYKLVPTLIEVMGDAAKELVATQAIVEKALKAEEEQFARTLERGLGILDNALSQLEGKELDGETAFKLYDTYGFPVDLTADVCRERDITVDEAGFEAAMAEQRSRAQAAGQFDTDYNDSLKIDAETEFCGYSDLNGEAKVIGLYVDGQAVDALAEGDQGVVVLDSTPFYGESGGQCGDKGLLSAEGVEFEVKDTQKYGQAMGHIGLVKAGSIAMGQTLNAAVDKKLRHRTELNHSVTHLLHAALRQVLGTHVSQKGSLVEPERLRFDFSHFEAVKREELKQVEDLVNTQIRRNHELKAEVMDIDQAKEKGAMALFGEKYDSQVRVVTMGDFSIELCGGTHVGRTGDIGLFKITSEGGIAAGIRRIEAVTGAAAIAYVGEQQAQLEQAASLLKGDSASVVAKLKAQLDKTKQLEKELSQLKDKLAAATSADLAGEAQELAGVKVLVKLLEGVEAGALRGLQDELKQKLQSGIVVLGIAGDAKVNLIAGVTKDLTGKVKAGELVAMVAAQVGGKGGGRPDMAQAGGSEPEKLAGALDSVIPWLSERLA.

Zn(2+) is bound by residues H562, H566, C664, and H668.

This sequence belongs to the class-II aminoacyl-tRNA synthetase family. Requires Zn(2+) as cofactor.

The protein localises to the cytoplasm. The enzyme catalyses tRNA(Ala) + L-alanine + ATP = L-alanyl-tRNA(Ala) + AMP + diphosphate. Functionally, catalyzes the attachment of alanine to tRNA(Ala) in a two-step reaction: alanine is first activated by ATP to form Ala-AMP and then transferred to the acceptor end of tRNA(Ala). Also edits incorrectly charged Ser-tRNA(Ala) and Gly-tRNA(Ala) via its editing domain. The chain is Alanine--tRNA ligase from Shewanella loihica (strain ATCC BAA-1088 / PV-4).